Here is a 478-residue protein sequence, read N- to C-terminus: Pyruvate kinase (478 aa).

Substrate is bound at residue arginine 36. Residues asparagine 38, serine 40, and aspartate 70 each coordinate K(+). Residue 38 to 41 (NFSH) coordinates ATP. ATP-binding residues include arginine 77 and lysine 160. Glutamate 225 provides a ligand contact to Mg(2+). Residues glycine 251, aspartate 252, and threonine 284 each coordinate substrate. Aspartate 252 provides a ligand contact to Mg(2+).

Belongs to the pyruvate kinase family. As to quaternary structure, homotetramer. It depends on Mg(2+) as a cofactor. K(+) serves as cofactor.

It carries out the reaction pyruvate + ATP = phosphoenolpyruvate + ADP + H(+). Its pathway is carbohydrate degradation; glycolysis; pyruvate from D-glyceraldehyde 3-phosphate: step 5/5. With respect to regulation, allosterically activated by AMP and by several sugar phosphates. Belongs to type II PK. The sequence is that of Pyruvate kinase (pykA) from Haemophilus influenzae (strain ATCC 51907 / DSM 11121 / KW20 / Rd).